We begin with the raw amino-acid sequence, 944 residues long: Translation initiation factor IF-2 (944 aa).

Residues 61–281 (IQANQPAKNP…TAKNNKSHKI (221 aa)) are disordered. Residues 132–150 (TFENQTPPTENTPKVVSHS) show a composition bias toward polar residues. Basic and acidic residues predominate over residues 151 to 169 (QIEKAKQKLQEIQKSREAL). The segment covering 175 to 185 (SNANNASNTNN) has biased composition (low complexity). A compositionally biased stretch (basic and acidic residues) spans 186–203 (AKKEISEVKKQEQEIKRH). A compositionally biased stretch (basic residues) spans 204 to 215 (ENIKRRTGFRVI). Positions 244-259 (EDIKKEWQEKDKQEAK) are enriched in basic and acidic residues. The 170-residue stretch at 443 to 612 (ERPPVVTIMG…LIQADIMELK (170 aa)) folds into the tr-type G domain. Residues 452–459 (GHVDHGKT) form a G1 region. 452 to 459 (GHVDHGKT) lines the GTP pocket. The G2 stretch occupies residues 477–481 (GITQH). The tract at residues 498 to 501 (DTPG) is G3. GTP contacts are provided by residues 498–502 (DTPGH) and 552–555 (NKMD). Residues 552–555 (NKMD) form a G4 region. Positions 588–590 (SAK) are G5.

It belongs to the TRAFAC class translation factor GTPase superfamily. Classic translation factor GTPase family. IF-2 subfamily.

The protein localises to the cytoplasm. In terms of biological role, one of the essential components for the initiation of protein synthesis. Protects formylmethionyl-tRNA from spontaneous hydrolysis and promotes its binding to the 30S ribosomal subunits. Also involved in the hydrolysis of GTP during the formation of the 70S ribosomal complex. The chain is Translation initiation factor IF-2 from Helicobacter pylori (strain HPAG1).